The primary structure comprises 186 residues: Protein GrpE (186 aa).

2 stretches are compositionally biased toward basic and acidic residues: residues 1-13 (MSDN…EEQH) and 23-34 (EETHQAEDAVEH). Positions 1–34 (MSDNKTELNEEQHNATAEGEVSEETHQAEDAVEH) are disordered.

It belongs to the GrpE family. Homodimer.

Its subcellular location is the cytoplasm. Functionally, participates actively in the response to hyperosmotic and heat shock by preventing the aggregation of stress-denatured proteins, in association with DnaK and GrpE. It is the nucleotide exchange factor for DnaK and may function as a thermosensor. Unfolded proteins bind initially to DnaJ; upon interaction with the DnaJ-bound protein, DnaK hydrolyzes its bound ATP, resulting in the formation of a stable complex. GrpE releases ADP from DnaK; ATP binding to DnaK triggers the release of the substrate protein, thus completing the reaction cycle. Several rounds of ATP-dependent interactions between DnaJ, DnaK and GrpE are required for fully efficient folding. The protein is Protein GrpE of Hydrogenovibrio crunogenus (strain DSM 25203 / XCL-2) (Thiomicrospira crunogena).